The chain runs to 231 residues: Uracil-DNA glycosylase (231 aa).

Aspartate 74 (proton acceptor) is an active-site residue.

It belongs to the uracil-DNA glycosylase (UDG) superfamily. UNG family.

It is found in the cytoplasm. It catalyses the reaction Hydrolyzes single-stranded DNA or mismatched double-stranded DNA and polynucleotides, releasing free uracil.. Its function is as follows. Excises uracil residues from the DNA which can arise as a result of misincorporation of dUMP residues by DNA polymerase or due to deamination of cytosine. The polypeptide is Uracil-DNA glycosylase (Campylobacter jejuni subsp. jejuni serotype O:6 (strain 81116 / NCTC 11828)).